A 236-amino-acid polypeptide reads, in one-letter code: Reticulon-3 (236 aa).

Residues 1-24 (MAEPSAATQSPSISSSSSGAEPSA) show a composition bias toward low complexity. Positions 1–31 (MAEPSAATQSPSISSSSSGAEPSAPGGGGSP) are disordered. Alanine 2 bears the N-acetylalanine mark. The Cytoplasmic portion of the chain corresponds to 2 to 67 (AEPSAATQSP…KKTGFVFGTT (66 aa)). Position 30 is a phosphoserine (serine 30). The Reticulon domain maps to 48–236 (VHDLIFWRDV…LPGIAKKKAE (189 aa)). An intramembrane region (helical) is located at residues 68–91 (LIMLLSLAAFSVISVVSYLILALL). Residues 92–151 (SVTISFRIYKSVIQAVQKSEEGHPFKAYLDVDITLSSEAFHNYMNAAMVHINRALKLIIR) lie on the Cytoplasmic side of the membrane. An intramembrane region (helical) is located at residues 152 to 172 (LFLVEDLVDSLKLAVFMWLMT). The Cytoplasmic portion of the chain corresponds to 173–176 (YVGA). Positions 177-197 (VFNGITLLILAELLIFSVPIV) form an intramembrane region, helical. The interval 191 to 236 (IFSVPIVYEKYKTQIDHYVGIARDQTKSIVEKIQAKLPGIAKKKAE) is interaction with FADD. Residues 198–236 (YEKYKTQIDHYVGIARDQTKSIVEKIQAKLPGIAKKKAE) lie on the Cytoplasmic side of the membrane. Residues 204–206 (QID) form an interaction with BACE1 region.

Homodimer. Interacts with RTN4. Interacts with BACE1, BACE2, BCL2 and FADD. Interacts with ATL1 and ATL2. Interacts with TMEM33. Interacts with ZFYVE27 and with KIF5A in a ZFYVE27-dependent manner. Interacts with RIGI. Interacts with TRIM25.

Its subcellular location is the endoplasmic reticulum membrane. The protein localises to the golgi apparatus membrane. Its function is as follows. May be involved in membrane trafficking in the early secretory pathway. Inhibits BACE1 activity and amyloid precursor protein processing. May induce caspase-8 cascade and apoptosis. May favor BCL2 translocation to the mitochondria upon endoplasmic reticulum stress. Induces the formation of endoplasmic reticulum tubules. Acts also as an inflammation-resolving regulator by interacting with both TRIM25 and RIGI, subsequently impairing RIGI 'Lys-63'-linked polyubiquitination leading to IRF3 and NF-kappa-B inhibition. This Pongo abelii (Sumatran orangutan) protein is Reticulon-3 (RTN3).